A 175-amino-acid polypeptide reads, in one-letter code: E1B protein, small T-antigen (175 aa).

The tract at residues 153–175 (LAEEDEDEEGTTLTTEAEQESSA) is disordered.

It belongs to the adenoviridae E1B 19 kDa protein family.

The sequence is that of E1B protein, small T-antigen from Mus musculus (Mouse).